The following is an 82-amino-acid chain: Exodeoxyribonuclease 7 small subunit (82 aa).

The protein belongs to the XseB family. As to quaternary structure, heterooligomer composed of large and small subunits.

It localises to the cytoplasm. The enzyme catalyses Exonucleolytic cleavage in either 5'- to 3'- or 3'- to 5'-direction to yield nucleoside 5'-phosphates.. Functionally, bidirectionally degrades single-stranded DNA into large acid-insoluble oligonucleotides, which are then degraded further into small acid-soluble oligonucleotides. This Sodalis glossinidius (strain morsitans) protein is Exodeoxyribonuclease 7 small subunit.